The following is a 224-amino-acid chain: MQNAEAAPALLAAHGLVGRRGGRRPLDLNLRPGQLVHVRGANGSGKTSLLRTLAGLLRPRRGEVRWNGADIHADLPGYYLHMAHLGHDNGCSDALTARENLRYALHVAGAPRAEPELERALRDWGLAAGADAPAARLSQGQGRRLALARVMLSRKRLWLLDEPDAGLDAASLQRLHGMLDAHLAGGGAAVLASHRGGGAWAGCTQTLELDEYAHAEVVGADCLA.

The region spanning methionine 1 to alanine 220 is the ABC transporter domain. Glycine 40–threonine 47 serves as a coordination point for ATP.

This sequence belongs to the ABC transporter superfamily. CcmA exporter (TC 3.A.1.107) family. In terms of assembly, the complex is composed of two ATP-binding proteins (CcmA) and two transmembrane proteins (CcmB).

It is found in the cell inner membrane. It catalyses the reaction heme b(in) + ATP + H2O = heme b(out) + ADP + phosphate + H(+). Part of the ABC transporter complex CcmAB involved in the biogenesis of c-type cytochromes; once thought to export heme, this seems not to be the case, but its exact role is uncertain. Responsible for energy coupling to the transport system. The chain is Cytochrome c biogenesis ATP-binding export protein CcmA from Bordetella parapertussis (strain 12822 / ATCC BAA-587 / NCTC 13253).